A 757-amino-acid polypeptide reads, in one-letter code: MESADSTGKGSTEQSESQRQSQMDRLDREEAFYQFVNNLNDEDYRLMRDNNLLGTPGEITKEELLQRLQQIKEGPPQPSTEETRGDSVSTGEDPAEDSSNGDSIIDWLNSVRQTGNTTRSGQRGNQSWRAVSRTNPNSGDFRFSLEINVNRTSGTASMPSLDQSAEMPGPEDMEVSSQGEAENVPEPETVPESIREPESVDEPVSVAEPVSVAEPVSVAEPESVAEPESVAASVPVPESVPEPESVPEPESVPEPESVPEPESVPEPESVPEPESVPEPESVPEPESVPEPESVPEPESVPEPESVPEPESIAEPESVPVPESVPVATRPAPVEVTVEEAPIQRGQRRARSRSPDQRRTRARTDRSRSPLYQTVDPPIRRAQHSSSQTVDASNTEEAEGSSRTRHHVSSQVHSSSSNETEGSSRTRQHITARQQALGTEGQSQSTVHLSNPESRSSSQTPQTDSPSNAETTGTGQRPPTIVLDLQVRRVRPGDYRQRDSIANRTRSRSQTPNNTVTYESERGGFRRTFSRSERAGVRTYVSTIRIPIRRILNTGLSETTSVAIQTMLRQIMTGFGELSYFMYNDNDADPNNPTAVSPPAAVPGEVQNNPSAEVRAPIAEPAEPVAPVESDEGSNVATSATRREGRNSRGGVTLEESGSLPFLSLAQFFLLNEDDDDQPRGLTKEQIDNLSTRNYGENDALKTCSVCITEYTEGNKLRKLPCSHEYHIHCIDRWLSENSTCPICRRAVLVAGNRESIV.

Over residues 1–10 (MESADSTGKG) the composition is skewed to polar residues. Disordered regions lie at residues 1 to 29 (MESA…LDRE), 68 to 519 (LQQI…TYES), and 619 to 652 (EPAE…GGVT). Residues 11 to 21 (STEQSESQRQS) are compositionally biased toward low complexity. Composition is skewed to polar residues over residues 110–138 (SVRQ…NPNS) and 147–163 (INVN…SLDQ). A run of 21 repeats spans residues 197-202 (PESVDE), 203-208 (PVSVAE), 209-214 (PVSVAE), 215-220 (PVSVAE), 221-226 (PESVAE), 227-232 (PESVAA), 237-242 (PESVPE), 243-248 (PESVPE), 249-254 (PESVPE), 255-260 (PESVPE), 261-266 (PESVPE), 267-272 (PESVPE), 273-278 (PESVPE), 279-284 (PESVPE), 285-290 (PESVPE), 291-296 (PESVPE), 297-302 (PESVPE), 303-308 (PESVPE), 309-314 (PESIAE), 315-320 (PESVPV), and 321-326 (PESVPV). The segment at 197-326 (PESVDEPVSV…SVPVPESVPV (130 aa)) is 21 X 6 AA approximate repeats of P-[EV]-S-V-[PA]-[EV]. Over residues 202–237 (EPVSVAEPVSVAEPVSVAEPESVAEPESVAASVPVP) the composition is skewed to low complexity. Residues 245–313 (SVPEPESVPE…ESVPEPESIA (69 aa)) are compositionally biased toward acidic residues. A compositionally biased stretch (low complexity) spans 314-327 (EPESVPVPESVPVA). Over residues 352 to 367 (RSPDQRRTRARTDRSR) the composition is skewed to basic and acidic residues. Residues 383-392 (HSSSQTVDAS) are compositionally biased toward polar residues. Residues 408 to 424 (SSQVHSSSSNETEGSSR) show a composition bias toward low complexity. Residues 428 to 452 (HITARQQALGTEGQSQSTVHLSNPE) show a composition bias toward polar residues. Over residues 453–466 (SRSSSQTPQTDSPS) the composition is skewed to low complexity. Residues 467 to 476 (NAETTGTGQR) are compositionally biased toward polar residues. Residues 490–500 (RPGDYRQRDSI) are compositionally biased toward basic and acidic residues. Over residues 501–517 (ANRTRSRSQTPNNTVTY) the composition is skewed to polar residues. Residues 703–744 (CSVCITEYTEGNKLRKLPCSHEYHIHCIDRWLSENSTCPICR) form an RING-type; atypical zinc finger. Positions 754–757 (ESIV) match the PDZ-binding motif.

This sequence belongs to the RNF12 family. In terms of assembly, forms homodimers through the C-terminal region. The N-terminus interacts with the homeobox of LIM/homeobox factor lhx1/lim1, with lhx3/lim3 and lhx5/lim5, and with the N-terminus of ldb1. As to expression, shows overlapping expression with lhx1/lim1 and ldb1 in the gastrula mesoderm, and expression overlaps with ldb1 throughout early embryogenesis. After gastrulation, expression is gradually restricted to tissues originated from the ectoderm, the neuroectoderm, neural crest and epidermis, and subsequently to the neural tube as well as the head and tailbud region.

Its subcellular location is the nucleus. It carries out the reaction S-ubiquitinyl-[E2 ubiquitin-conjugating enzyme]-L-cysteine + [acceptor protein]-L-lysine = [E2 ubiquitin-conjugating enzyme]-L-cysteine + N(6)-ubiquitinyl-[acceptor protein]-L-lysine.. It functions in the pathway protein modification; protein ubiquitination. In terms of biological role, acts as an E3 ubiquitin-protein ligase specific for ldb1, mediating ubiquitination and proteasome-dependent degradation of excess ldb1 in a RING-dependent manner. Does not degrade ldb1 bound to lhx1/lim1, nor lim1 itself and thus contributes to the establishment of proper ldb1-lhx1/lim1 stoichiometry and the formation of a ldb1-lhx1/lim1 complex. Interferes with Spemann organizer function and suppresses secondary axis formation induced by ldb1 and lhx1/lim1. This is E3 ubiquitin-protein ligase RNF12-B (rnf12-b) from Xenopus laevis (African clawed frog).